Consider the following 465-residue polypeptide: ATP synthase subunit beta (465 aa).

ATP is bound at residue 148–155 (GGAGVGKT).

It belongs to the ATPase alpha/beta chains family. In terms of assembly, F-type ATPases have 2 components, CF(1) - the catalytic core - and CF(0) - the membrane proton channel. CF(1) has five subunits: alpha(3), beta(3), gamma(1), delta(1), epsilon(1). CF(0) has three main subunits: a(1), b(2) and c(9-12). The alpha and beta chains form an alternating ring which encloses part of the gamma chain. CF(1) is attached to CF(0) by a central stalk formed by the gamma and epsilon chains, while a peripheral stalk is formed by the delta and b chains.

Its subcellular location is the cell inner membrane. The catalysed reaction is ATP + H2O + 4 H(+)(in) = ADP + phosphate + 5 H(+)(out). Its function is as follows. Produces ATP from ADP in the presence of a proton gradient across the membrane. The catalytic sites are hosted primarily by the beta subunits. The protein is ATP synthase subunit beta of Neisseria gonorrhoeae (strain ATCC 700825 / FA 1090).